The following is a 449-amino-acid chain: Glycerol-3-phosphate acyltransferase 3 (449 aa).

A run of 3 helical transmembrane segments spans residues 9-29 (FVLLHVWMSIVAGLIVLPAMF), 146-166 (ISVRLTIIWGLGVFVRYCVLL), and 170-190 (ITLAVIGLSWLVIGTTLVGFL). The HXXXXD motif motif lies at 238–243 (HTSPID). Residues 358 to 378 (MVSYILRMMTSWAIVCNVWYL) form a helical membrane-spanning segment.

This sequence belongs to the 1-acyl-sn-glycerol-3-phosphate acyltransferase family.

It localises to the endoplasmic reticulum membrane. The catalysed reaction is sn-glycerol 3-phosphate + an acyl-CoA = a 1-acyl-sn-glycero-3-phosphate + CoA. It carries out the reaction a 1-acyl-sn-glycero-3-phosphate + an acyl-CoA = a 1,2-diacyl-sn-glycero-3-phosphate + CoA. The enzyme catalyses dodecanoyl-CoA + sn-glycerol 3-phosphate = 1-dodecanoyl-sn-glycerol 3-phosphate + CoA. It catalyses the reaction sn-glycerol 3-phosphate + hexadecanoyl-CoA = 1-hexadecanoyl-sn-glycero-3-phosphate + CoA. The catalysed reaction is sn-glycerol 3-phosphate + (9Z)-octadecenoyl-CoA = 1-(9Z-octadecenoyl)-sn-glycero-3-phosphate + CoA. It carries out the reaction (9Z,12Z)-octadecadienoyl-CoA + sn-glycerol 3-phosphate = 1-(9Z,12Z)-octadecadienoyl-sn-glycero-3-phosphate + CoA. The enzyme catalyses 1-tetradecanoyl-sn-glycerol 3-phosphate + (9Z)-octadecenoyl-CoA = 1-tetradecanoyl-2-(9Z)-octadecenoyl-sn-glycero-3-phosphate + CoA. It catalyses the reaction 1-hexadecanoyl-sn-glycero-3-phosphate + (9Z)-octadecenoyl-CoA = 1-hexadecanoyl-2-(9Z-octadecenoyl)-sn-glycero-3-phosphate + CoA. The catalysed reaction is 1-(9Z-octadecenoyl)-sn-glycero-3-phosphate + (9Z)-octadecenoyl-CoA = 1,2-di-(9Z-octadecenoyl)-sn-glycero-3-phosphate + CoA. It carries out the reaction 1-(6Z,9Z,12Z-octadecatrienoyl)-sn-glycero-3-phosphate + (9Z)-octadecenoyl-CoA = (6Z,9Z,12Z)-octadecatrienoyl-2-(9Z)-octadecenoyl-sn-glycero-3-phosphate + CoA. The enzyme catalyses 1-(9Z,12Z,15Z)-octadecatrienoyl-sn-glycero-3-phosphate + (9Z)-octadecenoyl-CoA = 1-(9Z,12Z,15Z)-octadecatrienoyl-2-(9Z)-octadecenoyl-sn-glycero-3-phosphate + CoA. It catalyses the reaction 1-(9Z-octadecenoyl)-sn-glycero-3-phosphate + tetradecanoyl-CoA = 1-(9Z)-octadecenoyl-2-tetradecanoyl-sn-glycero-3-phosphate + CoA. The catalysed reaction is 1-(9Z-octadecenoyl)-sn-glycero-3-phosphate + hexadecanoyl-CoA = 1-(9Z)-octadecenoyl-2-hexadecanoyl-sn-glycero-3-phosphate + CoA. It carries out the reaction 1-(9Z-octadecenoyl)-sn-glycero-3-phosphate + octadecanoyl-CoA = 1-(9Z-octadecenoyl)-2-octadecanoyl-sn-glycero-3-phosphate + CoA. The enzyme catalyses 1-(9Z-octadecenoyl)-sn-glycero-3-phosphate + (9Z,12Z)-octadecadienoyl-CoA = 1-(9Z)-octadecenoyl-2-(9Z,12Z)-octadecadienoyl-sn-glycero-3-phosphate + CoA. It catalyses the reaction 1-(5Z,8Z,11Z,14Z-eicosatetraenoyl)-sn-glycero-3-phosphate + (9Z)-octadecenoyl-CoA = 1-(5Z,8Z,11Z,14Z)-eicosatetraenoyl-2-(9Z)-octadecenoyl-sn-glycero-3-phosphate + CoA. It participates in glycerolipid metabolism; triacylglycerol biosynthesis. Its pathway is phospholipid metabolism; CDP-diacylglycerol biosynthesis; CDP-diacylglycerol from sn-glycerol 3-phosphate: step 1/3. Functionally, converts glycerol-3-phosphate to 1-acyl-sn-glycerol-3-phosphate (lysophosphatidic acid or LPA) by incorporating an acyl moiety at the sn-1 position of the glycerol backbone. Also converts LPA into 1,2-diacyl-sn-glycerol-3-phosphate (phosphatidic acid or PA) by incorporating an acyl moiety at the sn-2 position of the glycerol backbone. Protects cells against lipotoxicity. The protein is Glycerol-3-phosphate acyltransferase 3 of Danio rerio (Zebrafish).